Consider the following 158-residue polypeptide: NAD(P)H-quinone oxidoreductase subunit J, chloroplastic (158 aa).

It belongs to the complex I 30 kDa subunit family. NDH is composed of at least 16 different subunits, 5 of which are encoded in the nucleus.

It is found in the plastid. The protein localises to the chloroplast thylakoid membrane. It catalyses the reaction a plastoquinone + NADH + (n+1) H(+)(in) = a plastoquinol + NAD(+) + n H(+)(out). It carries out the reaction a plastoquinone + NADPH + (n+1) H(+)(in) = a plastoquinol + NADP(+) + n H(+)(out). In terms of biological role, NDH shuttles electrons from NAD(P)H:plastoquinone, via FMN and iron-sulfur (Fe-S) centers, to quinones in the photosynthetic chain and possibly in a chloroplast respiratory chain. The immediate electron acceptor for the enzyme in this species is believed to be plastoquinone. Couples the redox reaction to proton translocation, and thus conserves the redox energy in a proton gradient. The sequence is that of NAD(P)H-quinone oxidoreductase subunit J, chloroplastic from Solanum lycopersicum (Tomato).